The sequence spans 173 residues: Crossover junction endodeoxyribonuclease RuvC (173 aa).

Residues D8, E67, and D139 contribute to the active site. Mg(2+) contacts are provided by D8, E67, and D139.

This sequence belongs to the RuvC family. Homodimer which binds Holliday junction (HJ) DNA. The HJ becomes 2-fold symmetrical on binding to RuvC with unstacked arms; it has a different conformation from HJ DNA in complex with RuvA. In the full resolvosome a probable DNA-RuvA(4)-RuvB(12)-RuvC(2) complex forms which resolves the HJ. Mg(2+) is required as a cofactor.

Its subcellular location is the cytoplasm. The catalysed reaction is Endonucleolytic cleavage at a junction such as a reciprocal single-stranded crossover between two homologous DNA duplexes (Holliday junction).. Its function is as follows. The RuvA-RuvB-RuvC complex processes Holliday junction (HJ) DNA during genetic recombination and DNA repair. Endonuclease that resolves HJ intermediates. Cleaves cruciform DNA by making single-stranded nicks across the HJ at symmetrical positions within the homologous arms, yielding a 5'-phosphate and a 3'-hydroxyl group; requires a central core of homology in the junction. The consensus cleavage sequence is 5'-(A/T)TT(C/G)-3'. Cleavage occurs on the 3'-side of the TT dinucleotide at the point of strand exchange. HJ branch migration catalyzed by RuvA-RuvB allows RuvC to scan DNA until it finds its consensus sequence, where it cleaves and resolves the cruciform DNA. The chain is Crossover junction endodeoxyribonuclease RuvC from Vibrio campbellii (strain ATCC BAA-1116).